A 329-amino-acid chain; its full sequence is Tetraacyldisaccharide 4'-kinase (329 aa).

58 to 65 (SVGGTGKT) contacts ATP.

The protein belongs to the LpxK family.

The enzyme catalyses a lipid A disaccharide + ATP = a lipid IVA + ADP + H(+). It functions in the pathway glycolipid biosynthesis; lipid IV(A) biosynthesis; lipid IV(A) from (3R)-3-hydroxytetradecanoyl-[acyl-carrier-protein] and UDP-N-acetyl-alpha-D-glucosamine: step 6/6. Transfers the gamma-phosphate of ATP to the 4'-position of a tetraacyldisaccharide 1-phosphate intermediate (termed DS-1-P) to form tetraacyldisaccharide 1,4'-bis-phosphate (lipid IVA). In Idiomarina loihiensis (strain ATCC BAA-735 / DSM 15497 / L2-TR), this protein is Tetraacyldisaccharide 4'-kinase.